A 484-amino-acid polypeptide reads, in one-letter code: MFRSITQRVIRNNCYKQSTKSITSSTSFINNSLSYTTTSNENDIKDKNEEHDHRAKGKGRELLLSFDKSGLAQFPKQVFKNRKYPITDFEKYLQDITKVRGPMSIDTFIKEVLTNPKYGYYMNKDVFGKGGDFITAPEVSQLFGEMIGIWCVATWEAMGKPKKLQIVEMGPGRGTLMKDILRSTKVFKEFYDSISVHLVEASPANKKTQKQNLLYFKDKAINFDHKTIGETPNGIKVTWVGKLEEVPTDIPTLFLAQEFFDALPIHVFRFSREKNDWCEVLVDEDITEHGEYYLRFVQSKGPTLMTTAVKHLLPEFGLDGYQVELGLAGLAISQQIANRIDKSGGAALIIDYGYDKIVKSSLQAIRDHEFVDILDKPGTADLSVWVDFQTIRKTVKLLKNKSTAIGPVDQGIFLKEMGIEHRLAQIGRKLDSNEKFEELVMGYKKLVDPKEMGTNYKVITICDKNITPIGFSTSKTYDDEDLMI.

The transit peptide at 1–12 directs the protein to the mitochondrion; that stretch reads MFRSITQRVIRN.

This sequence belongs to the NDUFAF7 family. In terms of assembly, homodimer. Interacts with ndufs2.

The protein localises to the mitochondrion. It carries out the reaction L-arginyl-[protein] + 2 S-adenosyl-L-methionine = N(omega),N(omega)'-dimethyl-L-arginyl-[protein] + 2 S-adenosyl-L-homocysteine + 2 H(+). Involved in the assembly or stability of mitochondrial NADH:ubiquinone oxidoreductase complex (complex I). Acts as an arginine methyltransferase and probably acts by mediating arginine methylation of ndufs2. In Dictyostelium discoideum (Social amoeba), this protein is Protein arginine methyltransferase NDUFAF7 homolog, mitochondrial.